The following is a 436-amino-acid chain: Xylose isomerase (436 aa).

Mg(2+) is bound by residues Asp-306 and Asp-308.

Belongs to the xylose isomerase family. As to quaternary structure, homotetramer. The cofactor is Mg(2+).

It localises to the cytoplasm. It catalyses the reaction alpha-D-xylose = alpha-D-xylulofuranose. In Sinorhizobium fredii (strain NBRC 101917 / NGR234), this protein is Xylose isomerase.